The following is a 343-amino-acid chain: Homeobox protein DBX1 (343 aa).

2 disordered regions span residues 56–100 (RSVP…TAFS) and 240–343 (KERE…ITVS). The homeobox DNA-binding region spans 181–240 (GMLRRAVFSDVQRKALEKMFQKQKYISKPDRKKLAAKLGLKDSQVKIWFQNRRMKWRNSK). The span at 314–323 (AHSSSPGKPS) shows a compositional bias: low complexity. A compositionally biased stretch (acidic residues) spans 326 to 343 (SDSEEEEEGEEQEEITVS).

This sequence belongs to the H2.0 homeobox family.

It is found in the nucleus. In terms of biological role, could have a role in patterning the central nervous system during embryogenesis. Has a key role in regulating the distinct phenotypic features that distinguish two major classes of ventral interneurons, V0 and V1 neurons. Regulates the transcription factor profile, neurotransmitter phenotype, intraspinal migratory path and axonal trajectory of V0 neurons, features that differentiate them from an adjacent set of V1 neurons. This is Homeobox protein DBX1 (DBX1) from Homo sapiens (Human).